A 66-amino-acid chain; its full sequence is Photosystem II reaction center protein H (66 aa).

A helical transmembrane segment spans residues 29 to 49 (PIMGLTMVLFLVFLLIILQIY).

Belongs to the PsbH family. PSII is composed of 1 copy each of membrane proteins PsbA, PsbB, PsbC, PsbD, PsbE, PsbF, PsbH, PsbI, PsbJ, PsbK, PsbL, PsbM, PsbT, PsbX, PsbY, PsbZ, Psb30/Ycf12, at least 3 peripheral proteins of the oxygen-evolving complex and a large number of cofactors. It forms dimeric complexes.

It is found in the plastid. The protein resides in the chloroplast thylakoid membrane. One of the components of the core complex of photosystem II (PSII), required for its stability and/or assembly. PSII is a light-driven water:plastoquinone oxidoreductase that uses light energy to abstract electrons from H(2)O, generating O(2) and a proton gradient subsequently used for ATP formation. It consists of a core antenna complex that captures photons, and an electron transfer chain that converts photonic excitation into a charge separation. The chain is Photosystem II reaction center protein H from Thalassiosira pseudonana (Marine diatom).